Consider the following 732-residue polypeptide: Nephrocystin-1 (732 aa).

A coiled-coil region spans residues Ala3–Arg105. Tyr46 bears the Phosphotyrosine; by FAK2 mark. 2 disordered regions span residues Ile103–Thr153 and Thr205–Thr244. Acidic residues-rich tracts occupy residues Thr115–Glu145 and Tyr210–Asp236. 3 positions are modified to phosphoserine; by CK2: Ser121, Ser123, and Ser126. The stretch at Glu127–Lys150 forms a coiled coil. The SH3 domain maps to Ser152–Glu212. A Phosphotyrosine; by FAK2 modification is found at Tyr349. A Phosphotyrosine; by SRC modification is found at Tyr721.

It belongs to the nephrocystin-1 family. Interacts with BCAR1, PTK2B/PYK2 and tensin. Interacts with INVS and NPHP3. Interacts with PACS1; the interaction is dependent on NPHP1 phosphorylation by CK2. Interacts with KIF7. Interacts with AHI1 and TNK2. Interacts with NPHP4 in a complex containing NPHP1, NPHP4 and RPGRIP1L. Interacts with IQCB1; the interaction likely requires additional interactors. Interacts with ANKS3. Interacts with SPATA7. Interacts with FLNA. Post-translationally, phosphorylation by CK2 is required for the interaction with PACS1 and the targeting to the base region of cilia. In terms of tissue distribution, widespread expression, with highest levels in pituitary gland, spinal cord, thyroid gland, testis, skeletal muscle, lymph node and trachea. Weakly expressed in heart, kidney and pancreas. Expressed in nasal epithelial cells (at protein level). Expressed in the renal collecting duct (at protein level).

It is found in the cell junction. The protein resides in the adherens junction. Its subcellular location is the cell projection. The protein localises to the cilium. It localises to the cytoplasm. It is found in the cytoskeleton. The protein resides in the cilium axoneme. Its subcellular location is the tight junction. Its function is as follows. Together with BCAR1 it may play a role in the control of epithelial cell polarity. Involved in the organization of apical junctions in kidney cells together with NPHP4 and RPGRIP1L/NPHP8. Does not seem to be strictly required for ciliogenesis. Seems to help to recruit PTK2B/PYK2 to cell matrix adhesions, thereby initiating phosphorylation of PTK2B/PYK2 and PTK2B/PYK2-dependent signaling. May play a role in the regulation of intraflagellar transport (IFT) during cilia assembly. Required for normal retina development. In connecting photoreceptor cilia influences the movement of some IFT proteins such as IFT88 and WDR19. Involved in spermatogenesis. This is Nephrocystin-1 (NPHP1) from Homo sapiens (Human).